Consider the following 335-residue polypeptide: UPF0353 protein BCG_1543 (335 aa).

Transmembrane regions (helical) follow at residues Trp18–Leu38 and Val67–Thr87. The region spanning Val98–Leu294 is the VWFA domain. A helical membrane pass occupies residues Val309–Ile329.

The protein belongs to the UPF0353 family.

Its subcellular location is the cell membrane. The sequence is that of UPF0353 protein BCG_1543 from Mycobacterium bovis (strain BCG / Pasteur 1173P2).